Here is a 497-residue protein sequence, read N- to C-terminus: Pentatricopeptide repeat-containing protein At2g36240 (497 aa).

PPR repeat units follow at residues 156–186, 192–226, 227–261, 262–296, 297–331, 332–366, 367–401, 402–436, and 437–471; these read LEPI…MKRL, NVGV…RAKP, DVCT…GCEP, NVVS…GCRF, SEAT…RVLP, SEFD…GQTP, CFIA…GILP, DSVT…GYEP, and DETT…DMLP.

This sequence belongs to the PPR family. P subfamily.

The polypeptide is Pentatricopeptide repeat-containing protein At2g36240 (Arabidopsis thaliana (Mouse-ear cress)).